Here is a 119-residue protein sequence, read N- to C-terminus: NADH-quinone oxidoreductase subunit A (119 aa).

Transmembrane regions (helical) follow at residues 7–27 (FPVL…MSIG), 63–83 (LIAI…PWGV), and 88–108 (IGWP…VGFV).

This sequence belongs to the complex I subunit 3 family. NDH-1 is composed of 14 different subunits. Subunits NuoA, H, J, K, L, M, N constitute the membrane sector of the complex.

Its subcellular location is the cell inner membrane. It carries out the reaction a quinone + NADH + 5 H(+)(in) = a quinol + NAD(+) + 4 H(+)(out). In terms of biological role, NDH-1 shuttles electrons from NADH, via FMN and iron-sulfur (Fe-S) centers, to quinones in the respiratory chain. The immediate electron acceptor for the enzyme in this species is believed to be ubiquinone. Couples the redox reaction to proton translocation (for every two electrons transferred, four hydrogen ions are translocated across the cytoplasmic membrane), and thus conserves the redox energy in a proton gradient. The polypeptide is NADH-quinone oxidoreductase subunit A (Cupriavidus pinatubonensis (strain JMP 134 / LMG 1197) (Cupriavidus necator (strain JMP 134))).